A 175-amino-acid polypeptide reads, in one-letter code: Crossover junction endodeoxyribonuclease RuvC (175 aa).

Residues aspartate 16, glutamate 76, and aspartate 148 contribute to the active site. Mg(2+) is bound by residues aspartate 16, glutamate 76, and aspartate 148.

The protein belongs to the RuvC family. In terms of assembly, homodimer which binds Holliday junction (HJ) DNA. The HJ becomes 2-fold symmetrical on binding to RuvC with unstacked arms; it has a different conformation from HJ DNA in complex with RuvA. In the full resolvosome a probable DNA-RuvA(4)-RuvB(12)-RuvC(2) complex forms which resolves the HJ. Mg(2+) serves as cofactor.

The protein resides in the cytoplasm. It carries out the reaction Endonucleolytic cleavage at a junction such as a reciprocal single-stranded crossover between two homologous DNA duplexes (Holliday junction).. In terms of biological role, the RuvA-RuvB-RuvC complex processes Holliday junction (HJ) DNA during genetic recombination and DNA repair. Endonuclease that resolves HJ intermediates. Cleaves cruciform DNA by making single-stranded nicks across the HJ at symmetrical positions within the homologous arms, yielding a 5'-phosphate and a 3'-hydroxyl group; requires a central core of homology in the junction. The consensus cleavage sequence is 5'-(A/T)TT(C/G)-3'. Cleavage occurs on the 3'-side of the TT dinucleotide at the point of strand exchange. HJ branch migration catalyzed by RuvA-RuvB allows RuvC to scan DNA until it finds its consensus sequence, where it cleaves and resolves the cruciform DNA. This is Crossover junction endodeoxyribonuclease RuvC from Rhodopseudomonas palustris (strain BisB18).